Reading from the N-terminus, the 296-residue chain is Nicotinate dehydrogenase FAD-subunit (296 aa).

Positions 1–179 constitute an FAD-binding PCMH-type domain; the sequence is MKDFEFFAPK…TEVIIDRPDA (179 aa). FAD is bound by residues 29–36, Gly101, 110–114, Asp123, Arg160, Met169, and Lys187; these read IIAGGTDL and TIGGN.

As to quaternary structure, heterooctamer of NDHM, NDHL, NDHS and NDHF. Dimer of heterotetramers. It depends on FAD as a cofactor.

The catalysed reaction is nicotinate + NADP(+) + H2O = 6-hydroxynicotinate + NADPH + H(+). It functions in the pathway cofactor degradation; nicotinate degradation; 6-hydroxynicotinate from nicotinate: step 1/1. Reversibly inactivated by selenide and sulfide. Not inhibited by cyanide. Functionally, catalyzes the hydroxylation of nicotinate to 6-hydroxynicotinate. Also active against 2-pyrazinecarboxylic acid, but inactive against other nicotinate analogs. The chain is Nicotinate dehydrogenase FAD-subunit (ndhF) from Eubacterium barkeri (Clostridium barkeri).